A 733-amino-acid chain; its full sequence is Arginine decarboxylase 1A, chloroplastic (733 aa).

Residues 1–44 (MPALGCCVDAAVSPPPGYSFLWDSSLPAPEIFPSGVPPSTNTAV) constitute a chloroplast transit peptide. Lys-157 bears the N6-(pyridoxal phosphate)lysine mark. Residues Ser-309, Gly-346, and 395 to 398 (ESGR) contribute to the pyridoxal 5'-phosphate site. Residue 460–461 (YA) participates in substrate binding. The Proton donor; shared with dimeric partner role is filled by Cys-548. Asp-549 contacts substrate. Pyridoxal 5'-phosphate is bound at residue Tyr-592.

This sequence belongs to the Orn/Lys/Arg decarboxylase class-II family. SpeA subfamily. Interacts, via its C-terminal internal region, with the tobacco mosaic virus (TMV) replicase helicase region. It depends on Mg(2+) as a cofactor. Pyridoxal 5'-phosphate is required as a cofactor.

It is found in the plastid. The protein resides in the chloroplast. The catalysed reaction is L-arginine + H(+) = agmatine + CO2. It functions in the pathway alkaloid biosynthesis; nicotine biosynthesis. The protein operates within amine and polyamine biosynthesis; agmatine biosynthesis; agmatine from L-arginine: step 1/1. Functionally, involved in the biosynthesis of pyridine alkaloid natural products, leading mainly to the production of anabasine, anatabine, nicotine and nornicotine, effective deterrents against herbivores with antiparasitic and pesticide properties (neurotoxins); nornicotine serves as the precursor in the synthesis of the carcinogen compound N'-nitrosonornicotine (NNN). Required for the biosynthesis of putrescine. Catalyzes the first step of polyamine (PA) biosynthesis to produce putrescine from arginine. This is Arginine decarboxylase 1A, chloroplastic from Nicotiana tabacum (Common tobacco).